We begin with the raw amino-acid sequence, 878 residues long: Alanine--tRNA ligase (878 aa).

Zn(2+) is bound by residues His567, His571, Cys669, and His673.

This sequence belongs to the class-II aminoacyl-tRNA synthetase family. The cofactor is Zn(2+).

The protein localises to the cytoplasm. It catalyses the reaction tRNA(Ala) + L-alanine + ATP = L-alanyl-tRNA(Ala) + AMP + diphosphate. Its function is as follows. Catalyzes the attachment of alanine to tRNA(Ala) in a two-step reaction: alanine is first activated by ATP to form Ala-AMP and then transferred to the acceptor end of tRNA(Ala). Also edits incorrectly charged Ser-tRNA(Ala) and Gly-tRNA(Ala) via its editing domain. This Rickettsia conorii (strain ATCC VR-613 / Malish 7) protein is Alanine--tRNA ligase.